Here is a 194-residue protein sequence, read N- to C-terminus: MEKKKNLEQDCIFRIVIIGYDYECGIKSLLKKFTLGEFSPFPESQVGVDFDIKTINVDNQDIKLQIWPQNKYFNDTSDKRDFLYKGAHGYLLVYGCHSQKSFDNLLNDWMVQIDKFSNEFSKRNLVLVCNNSETPETYMTKPNYLVDSNITKQWANSKNIPFFEINPKENFNVDEPFIQLARLIKNQNFINSTK.

19–27 (GYDYECGIK) contacts GTP. Residues 42-50 (PESQVGVDF) carry the Effector region motif. Residues 68 to 72 (PQNKY) and 130 to 133 (NNSE) each bind GTP.

It belongs to the small GTPase superfamily. Rab family.

The polypeptide is Ras-related protein RabU (rabU) (Dictyostelium discoideum (Social amoeba)).